The following is a 189-amino-acid chain: MVTMLMFLATLAGLFTTAKGQNFHLGKCPSPPVQENFDVKKYLGRWYEIEKIPASFEKGNCIQANYSLMENGNIEVLNKELSPDGTMNQVKGEAKQSNVSEPAKLEVQFFPLMPPAPYWILATDYENYALVYSCTTFFWLFHVDFVWILGRNPYLPPETITYLKDILTSNGIDIEKMTTTDQANCPDFL.

Positions 1–20 are cleaved as a signal peptide; the sequence is MVTMLMFLATLAGLFTTAKG. Glutamine 21 carries the post-translational modification Pyrrolidone carboxylic acid. Disulfide bonds link cysteine 28–cysteine 134 and cysteine 61–cysteine 185. N-linked (GlcNAc...) asparagine glycans are attached at residues asparagine 65 and asparagine 98.

This sequence belongs to the calycin superfamily. Lipocalin family. Homodimer. As to expression, highest levels of expression in brain, testis, virgin mammary gland and salivary gland. Moderate levels in skeletal muscle, lactating mammary gland and thymus. Low levels in lung and lymph node. No expression in kidney, pancreas, liver or spleen.

The protein localises to the secreted. APOD occurs in the macromolecular complex with lecithin-transport and binding of bilin. Appears to be able to transport a variety of ligands in a number of different contexts. The protein is Apolipoprotein D (Apod) of Mus musculus (Mouse).